The following is a 119-amino-acid chain: Ribonuclease P protein component (119 aa).

The protein belongs to the RnpA family. In terms of assembly, consists of a catalytic RNA component (M1 or rnpB) and a protein subunit.

It catalyses the reaction Endonucleolytic cleavage of RNA, removing 5'-extranucleotides from tRNA precursor.. Functionally, RNaseP catalyzes the removal of the 5'-leader sequence from pre-tRNA to produce the mature 5'-terminus. It can also cleave other RNA substrates such as 4.5S RNA. The protein component plays an auxiliary but essential role in vivo by binding to the 5'-leader sequence and broadening the substrate specificity of the ribozyme. The polypeptide is Ribonuclease P protein component (Edwardsiella ictaluri (strain 93-146)).